The chain runs to 407 residues: MKRAYIMVLDSFGIGSSADAERFGDAGSDTLGHIAQACAAGTADKGRSGPLHLPNLSRLGLGKAAEASTGTFPAGLDENADIIGAYAHASEISSGKDTPSGHWEIAGVPVLFDWGYFKDEENSFPQDLLDKLVKRANLPGYLGNCHSSGTVILDQLAEEHMKTGKPIFYTSADSVFQIACHEETFGLDKLYELCEIAREELTEGGYNIGRVIARPFIGDKPGHFERTGNRHDLAVEPPAPTILKKMVDEKGGEVVSVGKIADIYAQVGITKKVKATGIDALFDATLKEMDSAGDNTIVFTNFVDFDSAYGHRRDIPGYAAALELFDRRLPEMLSRVKGDDILILTADHGCDPSWHGTDHTRENVPVLIYGPNVKPGSYGHRETFADIGQTVAAYFGLSPMDYGKSIL.

Aspartate 10, aspartate 306, histidine 311, aspartate 347, histidine 348, and histidine 359 together coordinate Mn(2+).

The protein belongs to the phosphopentomutase family. The cofactor is Mn(2+).

The protein resides in the cytoplasm. It carries out the reaction 2-deoxy-alpha-D-ribose 1-phosphate = 2-deoxy-D-ribose 5-phosphate. It catalyses the reaction alpha-D-ribose 1-phosphate = D-ribose 5-phosphate. The protein operates within carbohydrate degradation; 2-deoxy-D-ribose 1-phosphate degradation; D-glyceraldehyde 3-phosphate and acetaldehyde from 2-deoxy-alpha-D-ribose 1-phosphate: step 1/2. Its function is as follows. Isomerase that catalyzes the conversion of deoxy-ribose 1-phosphate (dRib-1-P) and ribose 1-phosphate (Rib-1-P) to deoxy-ribose 5-phosphate (dRib-5-P) and ribose 5-phosphate (Rib-5-P), respectively. This Pectobacterium carotovorum subsp. carotovorum (strain PC1) protein is Phosphopentomutase.